Consider the following 426-residue polypeptide: MTWFIDRRLNGKNKSTVNRQRFLRRYKAQIKQSISEAINKRSVTDVDSGESVSIPTDDISEPMFHQGRGGLRHRVHPGNDHFIQNDRIERPQDGGGSGSGNGQASQDGEGQDEFVFQISKDEYLDLLFEDLALPNLKKNQHRQLNEYKTHRAGFTSNGVPANISVVRSLQNSLARRTAMTAGKRRELHALEAELETLSSSEPAQLLEEERLRREIAELRAKIEKVPFIDTFDLRYKNYEKRPDPSSQAVMFCLMDVSGSMDQATKDMAKRFYILLYLFLSRTYKNVEVVYIRHHTQAKEVDEHEFFYSQETGGTIVSSALKLMDEVVKERYDPGQWNIYAAQASDGDNWADDSPLCHEILAKKLLPVVRYYSYIEITRRAHQTLWREYEHLQAMFDNFAMQHIRDQDDIYPVFRELFQKQSANQSA.

A compositionally biased stretch (basic and acidic residues) spans 78 to 92 (GNDHFIQNDRIERPQ). The interval 78-108 (GNDHFIQNDRIERPQDGGGSGSGNGQASQDG) is disordered.

This sequence belongs to the UPF0229 family.

This Salmonella arizonae (strain ATCC BAA-731 / CDC346-86 / RSK2980) protein is UPF0229 protein YeaH.